Here is a 185-residue protein sequence, read N- to C-terminus: dCTP deaminase (185 aa).

Residues lysine 107–arginine 112, threonine 131–glutamate 133, glutamine 152, tyrosine 166, and glutamine 176 each bind dCTP. Glutamate 133 (proton donor/acceptor) is an active-site residue.

This sequence belongs to the dCTP deaminase family. Homotrimer.

It carries out the reaction dCTP + H2O + H(+) = dUTP + NH4(+). It functions in the pathway pyrimidine metabolism; dUMP biosynthesis; dUMP from dCTP (dUTP route): step 1/2. Catalyzes the deamination of dCTP to dUTP. This chain is dCTP deaminase, found in Wolbachia pipientis wMel.